A 464-amino-acid polypeptide reads, in one-letter code: 3-isopropylmalate dehydratase large subunit (464 aa).

Cysteine 345, cysteine 405, and cysteine 408 together coordinate [4Fe-4S] cluster.

This sequence belongs to the aconitase/IPM isomerase family. LeuC type 1 subfamily. As to quaternary structure, heterodimer of LeuC and LeuD. [4Fe-4S] cluster serves as cofactor.

The enzyme catalyses (2R,3S)-3-isopropylmalate = (2S)-2-isopropylmalate. The protein operates within amino-acid biosynthesis; L-leucine biosynthesis; L-leucine from 3-methyl-2-oxobutanoate: step 2/4. Functionally, catalyzes the isomerization between 2-isopropylmalate and 3-isopropylmalate, via the formation of 2-isopropylmaleate. The chain is 3-isopropylmalate dehydratase large subunit from Flavobacterium johnsoniae (strain ATCC 17061 / DSM 2064 / JCM 8514 / BCRC 14874 / CCUG 350202 / NBRC 14942 / NCIMB 11054 / UW101) (Cytophaga johnsonae).